Here is a 365-residue protein sequence, read N- to C-terminus: UDP-N-acetylglucosamine--N-acetylmuramyl-(pentapeptide) pyrophosphoryl-undecaprenol N-acetylglucosamine transferase (365 aa).

UDP-N-acetyl-alpha-D-glucosamine contacts are provided by residues 12-14, asparagine 128, arginine 169, serine 195, and glutamine 296; that span reads TGG.

This sequence belongs to the glycosyltransferase 28 family. MurG subfamily.

It is found in the cell inner membrane. It catalyses the reaction di-trans,octa-cis-undecaprenyl diphospho-N-acetyl-alpha-D-muramoyl-L-alanyl-D-glutamyl-meso-2,6-diaminopimeloyl-D-alanyl-D-alanine + UDP-N-acetyl-alpha-D-glucosamine = di-trans,octa-cis-undecaprenyl diphospho-[N-acetyl-alpha-D-glucosaminyl-(1-&gt;4)]-N-acetyl-alpha-D-muramoyl-L-alanyl-D-glutamyl-meso-2,6-diaminopimeloyl-D-alanyl-D-alanine + UDP + H(+). Its pathway is cell wall biogenesis; peptidoglycan biosynthesis. In terms of biological role, cell wall formation. Catalyzes the transfer of a GlcNAc subunit on undecaprenyl-pyrophosphoryl-MurNAc-pentapeptide (lipid intermediate I) to form undecaprenyl-pyrophosphoryl-MurNAc-(pentapeptide)GlcNAc (lipid intermediate II). This is UDP-N-acetylglucosamine--N-acetylmuramyl-(pentapeptide) pyrophosphoryl-undecaprenol N-acetylglucosamine transferase from Gluconobacter oxydans (strain 621H) (Gluconobacter suboxydans).